Reading from the N-terminus, the 153-residue chain is 6,7-dimethyl-8-ribityllumazine synthase (153 aa).

Residues phenylalanine 22, 56-58, and 80-82 each bind 5-amino-6-(D-ribitylamino)uracil; these read AFE and TVI. Residue 85-86 coordinates (2S)-2-hydroxy-3-oxobutyl phosphate; it reads ST. The active-site Proton donor is the histidine 88. Phenylalanine 113 lines the 5-amino-6-(D-ribitylamino)uracil pocket. Arginine 127 is a (2S)-2-hydroxy-3-oxobutyl phosphate binding site.

This sequence belongs to the DMRL synthase family. Forms an icosahedral capsid composed of 60 subunits, arranged as a dodecamer of pentamers.

The enzyme catalyses (2S)-2-hydroxy-3-oxobutyl phosphate + 5-amino-6-(D-ribitylamino)uracil = 6,7-dimethyl-8-(1-D-ribityl)lumazine + phosphate + 2 H2O + H(+). Its pathway is cofactor biosynthesis; riboflavin biosynthesis; riboflavin from 2-hydroxy-3-oxobutyl phosphate and 5-amino-6-(D-ribitylamino)uracil: step 1/2. Functionally, catalyzes the formation of 6,7-dimethyl-8-ribityllumazine by condensation of 5-amino-6-(D-ribitylamino)uracil with 3,4-dihydroxy-2-butanone 4-phosphate. This is the penultimate step in the biosynthesis of riboflavin. The polypeptide is 6,7-dimethyl-8-ribityllumazine synthase (Actinobacillus pleuropneumoniae serotype 5b (strain L20)).